A 334-amino-acid polypeptide reads, in one-letter code: Beta-hexosaminidase (334 aa).

Substrate contacts are provided by residues Asp-62, Arg-70, Arg-131, and 161-162; that span reads KH. Catalysis depends on His-174, which acts as the Proton donor/acceptor. The Nucleophile role is filled by Asp-246.

The protein belongs to the glycosyl hydrolase 3 family. NagZ subfamily.

The protein resides in the cytoplasm. It carries out the reaction Hydrolysis of terminal non-reducing N-acetyl-D-hexosamine residues in N-acetyl-beta-D-hexosaminides.. The protein operates within cell wall biogenesis; peptidoglycan recycling. In terms of biological role, plays a role in peptidoglycan recycling by cleaving the terminal beta-1,4-linked N-acetylglucosamine (GlcNAc) from peptide-linked peptidoglycan fragments, giving rise to free GlcNAc, anhydro-N-acetylmuramic acid and anhydro-N-acetylmuramic acid-linked peptides. The protein is Beta-hexosaminidase of Tolumonas auensis (strain DSM 9187 / NBRC 110442 / TA 4).